Reading from the N-terminus, the 1939-residue chain is Myosin-2 (1939 aa).

Positions 33-82 constitute a Myosin N-terminal SH3-like domain; that stretch reads DAKTSVFVAEPKESFVKGTIQSREGGKVTVKTEAGATLTVKEDQVFPMNP. Residues Thr-64 and Thr-69 each carry the phosphothreonine modification. In terms of domain architecture, Myosin motor spans 86 to 782; that stretch reads DKIEDMAMMT…LLGLLEEMRD (697 aa). Lys-130 carries the post-translational modification N6,N6,N6-trimethyllysine. 179-186 contacts ATP; it reads GESGAGKT. Tyr-389 bears the Phosphotyrosine mark. Ser-392 is modified (phosphoserine). Residue Thr-419 is modified to Phosphothreonine. Ser-625 bears the Phosphoserine mark. The tract at residues 659-681 is actin-binding; it reads LNKLMTNLRSTHPHFVRCIIPNE. His-757 carries the pros-methylhistidine modification. The tract at residues 761-775 is actin-binding; it reads KFGHTKVFFKAGLLG. The IQ domain occupies 785-814; it reads LAQLITRTQARCRGFLARVEYQKMVERRES. The stretch at 843–1939 forms a coiled coil; sequence LLKSAESEKE…EVHTKVISEE (1097 aa). Phosphoserine occurs at positions 1092 and 1096. Disordered stretches follow at residues 1126–1147 and 1153–1172; these read IEAE…SREL and RLEE…KKRE. The segment covering 1128–1147 has biased composition (basic and acidic residues); sequence AERASRAKAEKQRSDLSREL. Phosphoserine is present on residues Ser-1162 and Ser-1237. Phosphothreonine is present on Thr-1241. Position 1243 is a phosphoserine (Ser-1243). Residue Thr-1255 is modified to Phosphothreonine. Ser-1261 carries the post-translational modification Phosphoserine. Thr-1286 is modified (phosphothreonine). Phosphoserine is present on residues Ser-1288, Ser-1292, Ser-1303, and Ser-1306. Tyr-1464 is subject to Phosphotyrosine. Thr-1467 carries the phosphothreonine modification. Ser-1474 carries the post-translational modification Phosphoserine. Tyr-1492 bears the Phosphotyrosine mark. Ser-1495 carries the phosphoserine modification. Thr-1501 carries the phosphothreonine modification. At Ser-1514 the chain carries Phosphoserine. Thr-1517 bears the Phosphothreonine mark. Ser-1542, Ser-1554, Ser-1574, Ser-1600, Ser-1603, Ser-1714, and Ser-1726 each carry phosphoserine. A phosphothreonine mark is found at Thr-1730 and Thr-1736. Ser-1739 carries the post-translational modification Phosphoserine. Residues 1885 to 1915 are disordered; that stretch reads QAEEAEEQSNTNLSKFRKLQHELEEAEERAD.

The protein belongs to the TRAFAC class myosin-kinesin ATPase superfamily. Myosin family. Muscle myosin is a hexameric protein that consists of 2 heavy chain subunits (MHC), 2 alkali light chain subunits (MLC) and 2 regulatory light chain subunits (MLC-2). Interacts with GCSAM.

Its subcellular location is the cytoplasm. The protein localises to the myofibril. Its function is as follows. Myosins are actin-based motor molecules with ATPase activity essential for muscle contraction. This chain is Myosin-2 (MYH2), found in Sus scrofa (Pig).